We begin with the raw amino-acid sequence, 264 residues long: Ribonuclease HII (264 aa).

Positions 33–224 (GPVAGVDEVG…VRRVASGSNT (192 aa)) constitute an RNase H type-2 domain. 3 residues coordinate a divalent metal cation: aspartate 39, glutamate 40, and aspartate 133. The interval 222–264 (SNTAEVADGQPDPRDGTAQTGEGRWSKSSHPATMRATGRAQGT) is disordered.

Belongs to the RNase HII family. Mn(2+) is required as a cofactor. Requires Mg(2+) as cofactor.

The protein resides in the cytoplasm. It carries out the reaction Endonucleolytic cleavage to 5'-phosphomonoester.. In terms of biological role, endonuclease that specifically degrades the RNA of RNA-DNA hybrids. In Mycobacterium bovis (strain ATCC BAA-935 / AF2122/97), this protein is Ribonuclease HII.